A 242-amino-acid polypeptide reads, in one-letter code: 3-dehydroquinate dehydratase (242 aa).

3-dehydroquinate-binding positions include 39 to 41 (EVR) and arginine 73. The active-site Proton donor/acceptor is the histidine 135. Residue lysine 162 is the Schiff-base intermediate with substrate of the active site. Residues arginine 203 and glutamine 228 each coordinate 3-dehydroquinate.

It belongs to the type-I 3-dehydroquinase family. Homodimer.

It catalyses the reaction 3-dehydroquinate = 3-dehydroshikimate + H2O. It functions in the pathway metabolic intermediate biosynthesis; chorismate biosynthesis; chorismate from D-erythrose 4-phosphate and phosphoenolpyruvate: step 3/7. Involved in the third step of the chorismate pathway, which leads to the biosynthesis of aromatic amino acids. Catalyzes the cis-dehydration of 3-dehydroquinate (DHQ) and introduces the first double bond of the aromatic ring to yield 3-dehydroshikimate. This chain is 3-dehydroquinate dehydratase, found in Methanosarcina acetivorans (strain ATCC 35395 / DSM 2834 / JCM 12185 / C2A).